The chain runs to 546 residues: Branchpoint-bridging protein (546 aa).

Disordered stretches follow at residues 1-141 (MWRP…ASAK) and 178-199 (TGDV…YDAY). Residues 50–128 (RQERERDARD…DRGDSNEDGP (79 aa)) are compositionally biased toward basic and acidic residues. A KH domain is found at 251-330 (YIPVKEFPEI…SKVKTCVALI (80 aa)). 2 consecutive CCHC-type zinc fingers follow at residues 368 to 385 (QLCQ…ECPQ) and 393 to 410 (VICR…DCRG).

This sequence belongs to the BBP/SF1 family.

The protein localises to the nucleus. Its function is as follows. Necessary for the splicing of pre-mRNA. Has a role in the recognition of the branch site (5'-UACUAAC-3'), the pyrimidine tract and the 3'-splice site at the 3'-end of introns. The protein is Branchpoint-bridging protein (BBP) of Cryptococcus neoformans var. neoformans serotype D (strain B-3501A) (Filobasidiella neoformans).